The chain runs to 943 residues: MSSSSSQSSLYQPRPVLSSQRFSPAPDYIDTRRSFHGDSRLPLRESTGNVQQQHHHQEPSSAHSSFNGGSLVGCYQTPVTLSPSMQSSIPPPAPIVPSQSFDCLRSLQATTSRQHHHVPPPLPQVPTRYHQRGKPRNSINPLYFWPAFRQYRNRQAHKDTQKDKGGVWRRPELEDAFVDSVLLMPHMGRRKFSMGGKLHGRNMLISEYIFVICVALLGSKEIFRIDNSNDSIEQMGRKQVSSHMQVVKKFFEDLRCFHFLFPSEEKKEPGTTNSDDFYEEEEQESFKSNPVLTALAEGRVPDVRPNYEYFSQLLALQSSITVRPKTVEIFVSSADVKIRDEVAYDANDNPLDPASFPHLGKYMNSSGDDKPNVLGKDVLLHEYTRSLDRSTSACVKTVTRRWQRDAPAMYDSLDLPDRDEDCLLLEMCSTVDLHEHAKFPSGSELTGYVEVSVTQPALQGHRWKCVTRLTRPPELQTDEGRPEMYSNESGIHRRGCADTRHEDCGCHLRPRQDIHVPFPAVEWASILSMAVQYPDVEHQRKKEKRSCGKKPDLERSASSSKRKRSEDEGDAAAWTRREPTGSDLICKVAMYQELWSCAPDSTRWTRQAIIFWRFSTTNQWYKYNPVFRPAGTTWRWLTVNDPMSRYHQQRALVYPSAGGNNMPRDAVMSPTPSVSQHLTATMSENFSQAWDSSGSNVTTHTQVHVAGGGGGGGSNMTTLFDSFPSGLATPPPTASLHGSYSASGSFDAGNGVGGCYMPPTCGGGADGPHGGLPAPSQSYFDAAGQTVNTTFGDVKPLLSGSATNPYLPGAAGGGGTGSLDLSGQFAYDDGQQHQHQHQHQQHQQQNHNGGSNGGLPGWDMGPALDSWTAGSSAGGAPAATPTGPDWGPTAPVPRMTEHHPGMWDPVHWSNHGTPGRGGEGSPRQMKRRRTEVLVDGVPVTAGW.

Disordered stretches follow at residues 1 to 69 and 111 to 133; these read MSSS…FNGG and TSRQ…HQRG. The span at 29 to 43 shows a compositional bias: basic and acidic residues; that stretch reads IDTRRSFHGDSRLPL. A compositionally biased stretch (polar residues) spans 59–68; it reads PSSAHSSFNG. The TEA DNA-binding region spans 161–254; that stretch reads QKDKGGVWRR…QVVKKFFEDL (94 aa). Residues 537–555 show a composition bias toward basic and acidic residues; that stretch reads EHQRKKEKRSCGKKPDLER. Disordered stretches follow at residues 537–575 and 809–901; these read EHQR…AAWT and GAAG…HHPG. Low complexity predominate over residues 865 to 889; sequence DSWTAGSSAGGAPAATPTGPDWGPT.

The protein belongs to the TEC1 family.

It localises to the nucleus. BrlA, abaA and wetA are pivotal regulators of conidiophore development and conidium maturation. They act individually and together to regulate their own expression and that of numerous other sporulation-specific genes. Binds to the sequence 5'-CATTCY-3', where Y is a pyrimidine, making both major- and minor-groove contacts. The polypeptide is Conidiophore development regulator abaA (Hapsidospora chrysogena (Acremonium chrysogenum)).